Consider the following 89-residue polypeptide: Dynein light chain 1, cytoplasmic (89 aa).

It belongs to the dynein light chain family. Interacts with mett-10; the interaction is direct, and is required for the nuclear localization of mett-10. Component of a dynein-regulating complex composed of at least bicd-1, dlc-1 and egal-1. Interacts with egal-1 and unc-83. Interacts with fbf-2. Broadly expressed in tissues including the intestine, body wall muscles, germs cells, oocytes, the rectal valve and cells in the head.

The protein localises to the cytoplasm. Its subcellular location is the cytoskeleton. It is found in the nucleus envelope. It localises to the cytoplasmic granule. Acts as a non-catalytic accessory component of a dynein complex. Part of a complex with bicd-1 and egal-1, which is recruited to the nuclear envelope by unc-83, where in turn, it recruits dynein to the nuclear surface and regulates nuclear migrations in hypodermal precursor cells. Probably within a dynein motor complex, plays a role in the cell fate specification of the germline and oogenesis. In particular, it inhibits germ cell proliferation. Regulates the function and localization of the RNA-binding protein fbf-2 in the germline. Plays a role in mitotic and meiotic processes. Involved in the pairing of homologous chromosomes. Independently of its dynein-mediated functions, plays a role in germ cell apoptosis. The polypeptide is Dynein light chain 1, cytoplasmic (Caenorhabditis elegans).